The chain runs to 710 residues: Chaperonin-containing T-complex member BBS12 (710 aa).

Belongs to the TCP-1 chaperonin family. BBS12 subfamily. Component of the chaperonin-containing T-complex (TRiC), a heterooligomeric complex of about 850 to 900 kDa that forms two stacked rings, 12 to 16 nm in diameter. Interacts with MKKS.

It localises to the cell projection. The protein localises to the cilium. Its function is as follows. Component of the chaperonin-containing T-complex (TRiC), a molecular chaperone complex that assists the folding of proteins upon ATP hydrolysis. As part of the TRiC complex may play a role in the assembly of BBSome, a complex involved in ciliogenesis regulating transports vesicles to the cilia. Involved in adipogenic differentiation. The chain is Chaperonin-containing T-complex member BBS12 (BBS12) from Homo sapiens (Human).